The primary structure comprises 30 residues: Agglutinin alpha-1 chain (30 aa).

In terms of domain architecture, Jacalin-type lectin spans 1–30; the sequence is GVAFDDGSYTGIREINFEYNRETAIGGXQV.

It belongs to the jacalin lectin family. In terms of assembly, tetramer of four alpha chains associated with two or four beta chains.

Functionally, N-acetyl-galactosamine and D-galactose specific lectin. Binds the Tn-antigen structure GalNAc-alpha-1-O-Ser, the T-antigen structure Gal-beta1-3-GalNAc and IgA. The protein is Agglutinin alpha-1 chain of Morus nigra (Black mulberry).